Consider the following 163-residue polypeptide: Lipoprotein signal peptidase (163 aa).

3 helical membrane passes run 7–27 (LSFLWLSAVAFVIDLLTKYLV), 64–84 (WQKYFFIALALIISAVLVYLL), and 99–119 (ALIIGGALANMADRAYHGFVV). Active-site residues include Asp120 and Asp138. The chain crosses the membrane as a helical span at residues 133-153 (VFNVADIAICVGVGLLILDSF).

This sequence belongs to the peptidase A8 family.

Its subcellular location is the cell inner membrane. The catalysed reaction is Release of signal peptides from bacterial membrane prolipoproteins. Hydrolyzes -Xaa-Yaa-Zaa-|-(S,diacylglyceryl)Cys-, in which Xaa is hydrophobic (preferably Leu), and Yaa (Ala or Ser) and Zaa (Gly or Ala) have small, neutral side chains.. Its pathway is protein modification; lipoprotein biosynthesis (signal peptide cleavage). Functionally, this protein specifically catalyzes the removal of signal peptides from prolipoproteins. The sequence is that of Lipoprotein signal peptidase from Actinobacillus succinogenes (strain ATCC 55618 / DSM 22257 / CCUG 43843 / 130Z).